Here is a 353-residue protein sequence, read N- to C-terminus: Protein O-mannose kinase (353 aa).

Residues Met1–Ser19 are Cytoplasmic-facing. The chain crosses the membrane as a helical; Signal-anchor for type II membrane protein span at residues Leu20–Leu40. The Lumenal segment spans residues Gly41 to Leu353. Residues Val83 to Leu353 enclose the Protein kinase domain. Asn163 and Asn237 each carry an N-linked (GlcNAc...) asparagine glycan.

Belongs to the protein kinase superfamily. Ser/Thr protein kinase family. STKL subfamily.

It is found in the endoplasmic reticulum membrane. It catalyses the reaction 3-O-[beta-D-GalNAc-(1-&gt;3)-beta-D-GlcNAc-(1-&gt;4)-alpha-D-Man]-L-Thr-[protein] + ATP = 3-O-[beta-D-GalNAc-(1-&gt;3)-beta-D-GlcNAc-(1-&gt;4)-(O-6-P-alpha-D-Man)]-Thr-[protein] + ADP + H(+). Protein O-mannose kinase that specifically mediates phosphorylation at the 6-position of an O-mannose of the trisaccharide (N-acetylgalactosamine (GalNAc)-beta-1,3-N-acetylglucosamine (GlcNAc)-beta-1,4-mannose) to generate phosphorylated O-mannosyl trisaccharide (N-acetylgalactosamine-beta-1,3-N-acetylglucosamine-beta-1,4-(phosphate-6-)mannose). Phosphorylated O-mannosyl trisaccharide is a carbohydrate structure present in alpha-dystroglycan (DAG1), which is required for binding laminin G-like domain-containing extracellular proteins with high affinity. Only shows kinase activity when the GalNAc-beta-3-GlcNAc-beta-terminus is linked to the 4-position of O-mannose, suggesting that this disaccharide serves as the substrate recognition motif. This is Protein O-mannose kinase (POMK) from Gallus gallus (Chicken).